The sequence spans 444 residues: N-succinylarginine dihydrolase (444 aa).

Substrate contacts are provided by residues alanine 19–serine 28, asparagine 110, and histidine 137–arginine 138. Residue glutamate 174 is part of the active site. Residue arginine 214 participates in substrate binding. Histidine 250 is a catalytic residue. Substrate is bound by residues aspartate 252 and asparagine 362. Cysteine 368 acts as the Nucleophile in catalysis.

The protein belongs to the succinylarginine dihydrolase family. In terms of assembly, homodimer.

The enzyme catalyses N(2)-succinyl-L-arginine + 2 H2O + 2 H(+) = N(2)-succinyl-L-ornithine + 2 NH4(+) + CO2. It participates in amino-acid degradation; L-arginine degradation via AST pathway; L-glutamate and succinate from L-arginine: step 2/5. In terms of biological role, catalyzes the hydrolysis of N(2)-succinylarginine into N(2)-succinylornithine, ammonia and CO(2). The protein is N-succinylarginine dihydrolase of Shewanella sp. (strain ANA-3).